A 287-amino-acid polypeptide reads, in one-letter code: Inorganic pyrophosphatase (287 aa).

Arg-79 lines the diphosphate pocket. 3 residues coordinate Mg(2+): Asp-116, Asp-121, and Asp-153.

It belongs to the PPase family. Mg(2+) is required as a cofactor.

It localises to the cytoplasm. The catalysed reaction is diphosphate + H2O = 2 phosphate + H(+). The polypeptide is Inorganic pyrophosphatase (IPP1) (Zygosaccharomyces bailii).